A 199-amino-acid polypeptide reads, in one-letter code: Alkyl hydroperoxide reductase C (199 aa).

In terms of domain architecture, Thioredoxin spans 2 to 163 (VLVTYPAPDF…TLRMIDALHF (162 aa)). The active-site Cysteine sulfenic acid (-SOH) intermediate is the C50.

Belongs to the peroxiredoxin family. AhpC/Prx1 subfamily. As to quaternary structure, homodimer; disulfide-linked, upon oxidation. 5 homodimers assemble to form a ring-like decamer.

It localises to the cytoplasm. It carries out the reaction a hydroperoxide + NADH + H(+) = an alcohol + NAD(+) + H2O. Functionally, thiol-specific peroxidase that catalyzes the reduction of hydrogen peroxide and organic hydroperoxides to water and alcohols, respectively. Plays a role in cell protection against oxidative stress by detoxifying peroxides. The chain is Alkyl hydroperoxide reductase C from Buchnera aphidicola subsp. Baizongia pistaciae (strain Bp).